Reading from the N-terminus, the 76-residue chain is Sulfur carrier protein TusA (76 aa).

Residue cysteine 15 is the Cysteine persulfide intermediate of the active site.

This sequence belongs to the sulfur carrier protein TusA family. Mostly a monomer, a small portion forms homodimer via intermolecular disulfide bonds. Tightly interacts with DsrEFH.

It is found in the cytoplasm. The protein operates within energy metabolism; sulfur metabolism. In terms of biological role, sulfur carrier protein involved in sulfur trafficking for oxidative dissimilatory sulfur metabolism. Component of a sulfur relay system that starts with the sulfur-mobilizing rhodanese-like protein Rhd_2599 (Alvin_2599), which transfers the sulfur from a low-molecular-weight thiol, maybe glutathione, to the TusA protein (Alvin_2600); TusA serves as the sulfur donor for DsrEFH, which persulfurates DsrC; persulfurated DsrC very probably serves as a direct substrate for reverse-acting sulfite reductase, DsrAB. TusA seems to be not exclusively dedicated to sulfur oxidation and may have other important roles in the cell. Might also act as a sulfur mediator required for 2-thiouridine formation of tRNA. This is Sulfur carrier protein TusA from Allochromatium vinosum (strain ATCC 17899 / DSM 180 / NBRC 103801 / NCIMB 10441 / D) (Chromatium vinosum).